A 77-amino-acid polypeptide reads, in one-letter code: Putative defensin-like protein 185 (77 aa).

An N-terminal signal peptide occupies residues 1 to 22 (MKNSSILLLLVVFFVISSSGEA). 4 disulfide bridges follow: cysteine 25/cysteine 77, cysteine 31/cysteine 54, cysteine 40/cysteine 71, and cysteine 44/cysteine 73.

Belongs to the DEFL family.

It is found in the secreted. The polypeptide is Putative defensin-like protein 185 (LCR39) (Arabidopsis thaliana (Mouse-ear cress)).